The primary structure comprises 739 residues: NAD(P)H-quinone oxidoreductase subunit 5, chloroplastic (739 aa).

The next 16 helical transmembrane spans lie at 9–29 (WIIP…LLLF), 40–60 (WSFQ…NLSI), 89–109 (IDPL…MVLI), 125–145 (FAYM…SNLI), 147–167 (IYIF…FWFT), 184–204 (IGDF…GSFE), 224–244 (LFVT…SAQF), 258–278 (TPIS…FLVA), 289–311 (YIMN…LALA), 318–338 (GLAF…GMGS), 354–374 (ALLF…VGYS), 396–416 (NTFL…CFWS), 427–447 (YSTI…FYIF), 546–566 (LFPL…GIPF), 605–625 (VSSV…YKPP), and 718–738 (ISSY…VFFI).

It belongs to the complex I subunit 5 family. As to quaternary structure, NDH is composed of at least 16 different subunits, 5 of which are encoded in the nucleus.

It localises to the plastid. The protein localises to the chloroplast thylakoid membrane. It carries out the reaction a plastoquinone + NADH + (n+1) H(+)(in) = a plastoquinol + NAD(+) + n H(+)(out). The catalysed reaction is a plastoquinone + NADPH + (n+1) H(+)(in) = a plastoquinol + NADP(+) + n H(+)(out). Functionally, NDH shuttles electrons from NAD(P)H:plastoquinone, via FMN and iron-sulfur (Fe-S) centers, to quinones in the photosynthetic chain and possibly in a chloroplast respiratory chain. The immediate electron acceptor for the enzyme in this species is believed to be plastoquinone. Couples the redox reaction to proton translocation, and thus conserves the redox energy in a proton gradient. This Coffea arabica (Arabian coffee) protein is NAD(P)H-quinone oxidoreductase subunit 5, chloroplastic (ndhF).